A 497-amino-acid polypeptide reads, in one-letter code: MIRNSMKSHTELLSWNLLQKEADRVRLNSDSLTCVVPDSNNYESSKQINCIEYDYSRQRVNRTIIDLLIDLANEVKLQEKIDNLINGKKINISENRPALHTALRDLGNKSIMIDGLDIMSAVINTREKIKVISNQIREKKWLGHSGLPITDIVNIGIGGSDLGPRVCINALSNYISKEFNYHFISDVDPASFNDVIAKINPQTTLFIVSSKSFTTKETLLNARKAFALYEDTASIDQHFIAVTAHPERAYQMGIKTVLPIWDWVGGRFSFCSAVNLITAIAIGYEQFVELLAGAHDIDTHVQFTDFKNNIPVLMALIGIWNNNFLNIHYDLIGYNFKEYFVPYVQQLDMESNGKSIDVNGRMVDYATGPIVWGGLGNQAQHSYFQLLCQGTHRCVGDFITLKTNDEHEINSMCHYKMKVLSEGIQTIENPYGYIPGNMPMNHLILSDCSPYTLGALVALYEHKIFEQSVIWNINPFDQPGIESAKSAHREITLSSES.

Catalysis depends on E350, which acts as the Proton donor. Active-site residues include H381 and K485.

This sequence belongs to the GPI family.

It is found in the cytoplasm. The enzyme catalyses alpha-D-glucose 6-phosphate = beta-D-fructose 6-phosphate. It functions in the pathway carbohydrate biosynthesis; gluconeogenesis. The protein operates within carbohydrate degradation; glycolysis; D-glyceraldehyde 3-phosphate and glycerone phosphate from D-glucose: step 2/4. Functionally, catalyzes the reversible isomerization of glucose-6-phosphate to fructose-6-phosphate. The chain is Glucose-6-phosphate isomerase from Legionella pneumophila.